We begin with the raw amino-acid sequence, 433 residues long: Serine hydroxymethyltransferase (433 aa).

Residues leucine 132 and 136–138 (GHL) each bind (6S)-5,6,7,8-tetrahydrofolate. N6-(pyridoxal phosphate)lysine is present on lysine 241.

It belongs to the SHMT family. As to quaternary structure, homodimer. Pyridoxal 5'-phosphate is required as a cofactor.

The protein localises to the cytoplasm. The catalysed reaction is (6R)-5,10-methylene-5,6,7,8-tetrahydrofolate + glycine + H2O = (6S)-5,6,7,8-tetrahydrofolate + L-serine. Its pathway is one-carbon metabolism; tetrahydrofolate interconversion. The protein operates within amino-acid biosynthesis; glycine biosynthesis; glycine from L-serine: step 1/1. Functionally, catalyzes the reversible interconversion of serine and glycine with tetrahydrofolate (THF) serving as the one-carbon carrier. This reaction serves as the major source of one-carbon groups required for the biosynthesis of purines, thymidylate, methionine, and other important biomolecules. Also exhibits THF-independent aldolase activity toward beta-hydroxyamino acids, producing glycine and aldehydes, via a retro-aldol mechanism. The polypeptide is Serine hydroxymethyltransferase (Afipia carboxidovorans (strain ATCC 49405 / DSM 1227 / KCTC 32145 / OM5) (Oligotropha carboxidovorans)).